The chain runs to 90 residues: NELL2-interacting cell ontogeny regulator 1 (90 aa).

The first 26 residues, 1–26 (MVSSGYLQAVMLLLAVQLLCFRPSDA), serve as a signal peptide directing secretion.

The protein belongs to the NICOL family.

It localises to the secreted. MRNA-binding protein which interacts with a range of target mRNAs and may promote extracellular matrix production. The protein is NELL2-interacting cell ontogeny regulator 1 of Salmo salar (Atlantic salmon).